The sequence spans 161 residues: Endoribonuclease YbeY (161 aa).

Positions 121, 125, and 131 each coordinate Zn(2+).

This sequence belongs to the endoribonuclease YbeY family. It depends on Zn(2+) as a cofactor.

The protein localises to the cytoplasm. Its function is as follows. Single strand-specific metallo-endoribonuclease involved in late-stage 70S ribosome quality control and in maturation of the 3' terminus of the 16S rRNA. This is Endoribonuclease YbeY from Stenotrophomonas maltophilia (strain R551-3).